A 487-amino-acid chain; its full sequence is Aspyridones efflux protein apdF (487 aa).

The segment covering Met-1–Glu-21 has biased composition (basic and acidic residues). A disordered region spans residues Met-1 to Phe-25. The chain crosses the membrane as a helical span at residues Val-35–Val-55. The N-linked (GlcNAc...) asparagine glycan is linked to Asn-67. Helical transmembrane passes span Trp-75–Phe-95, Gly-99–Leu-119, Phe-126–Leu-146, Ala-159–Leu-179, Trp-191–Ile-211, Val-234–Leu-254, Gly-262–Gly-282, and Ile-293–Trp-313. Residue Asn-319 is glycosylated (N-linked (GlcNAc...) asparagine). The next 3 helical transmembrane spans lie at Ile-322 to Ala-342, Ile-354 to Pro-374, and Gly-385 to Phe-405.

This sequence belongs to the major facilitator superfamily. Monocarboxylate porter (TC 2.A.1.13) family.

It is found in the cell membrane. Efflux pump that may be involved in the secretion of aspyridones. This is Aspyridones efflux protein apdF from Emericella nidulans (strain FGSC A4 / ATCC 38163 / CBS 112.46 / NRRL 194 / M139) (Aspergillus nidulans).